The chain runs to 74 residues: Sec-independent protein translocase protein TatA (74 aa).

A helical membrane pass occupies residues 1 to 21 (MGSMSWIHWVIVLGIVALLFG). A disordered region spans residues 51–74 (EVADNKAKSALPRTEAEAEELRKS). A compositionally biased stretch (basic and acidic residues) spans 64 to 74 (TEAEAEELRKS).

The protein belongs to the TatA/E family. The Tat system comprises two distinct complexes: a TatABC complex, containing multiple copies of TatA, TatB and TatC subunits, and a separate TatA complex, containing only TatA subunits. Substrates initially bind to the TatABC complex, which probably triggers association of the separate TatA complex to form the active translocon.

Its subcellular location is the cell inner membrane. Functionally, part of the twin-arginine translocation (Tat) system that transports large folded proteins containing a characteristic twin-arginine motif in their signal peptide across membranes. TatA could form the protein-conducting channel of the Tat system. The chain is Sec-independent protein translocase protein TatA from Caulobacter vibrioides (strain ATCC 19089 / CIP 103742 / CB 15) (Caulobacter crescentus).